Reading from the N-terminus, the 477-residue chain is V-type proton ATPase subunit B (477 aa).

ATP is bound at residue Arg-365.

This sequence belongs to the ATPase alpha/beta chains family. As to quaternary structure, V-ATPase is a heteromultimeric enzyme composed of a peripheral catalytic V1 complex (components A to H) attached to an integral membrane V0 proton pore complex (components: a, c, c', c'', d, e, f and VOA1).

It is found in the vacuole membrane. Its function is as follows. Non-catalytic subunit of the V1 complex of vacuolar(H+)-ATPase (V-ATPase), a multisubunit enzyme composed of a peripheral complex (V1) that hydrolyzes ATP and a membrane integral complex (V0) that translocates protons. V-ATPase is responsible for acidifying and maintaining the pH of intracellular compartments. The chain is V-type proton ATPase subunit B from Encephalitozoon cuniculi (strain GB-M1) (Microsporidian parasite).